The chain runs to 485 residues: Glycogen synthase (485 aa).

Lys-20 is a binding site for ADP-alpha-D-glucose.

It belongs to the glycosyltransferase 1 family. Bacterial/plant glycogen synthase subfamily.

It carries out the reaction [(1-&gt;4)-alpha-D-glucosyl](n) + ADP-alpha-D-glucose = [(1-&gt;4)-alpha-D-glucosyl](n+1) + ADP + H(+). It participates in glycan biosynthesis; glycogen biosynthesis. Functionally, synthesizes alpha-1,4-glucan chains using ADP-glucose. The protein is Glycogen synthase of Vibrio vulnificus (strain YJ016).